The primary structure comprises 553 residues: Glucose-6-phosphate isomerase (553 aa).

The Proton donor role is filled by Glu-357. Catalysis depends on residues His-388 and Lys-514. Residues 524–553 form a disordered region; the sequence is ITGAGSPPPQSDSSTDGLVRRYRTERGRAG. Residues 541–553 are compositionally biased toward basic and acidic residues; sequence LVRRYRTERGRAG.

It belongs to the GPI family.

It localises to the cytoplasm. The catalysed reaction is alpha-D-glucose 6-phosphate = beta-D-fructose 6-phosphate. Its pathway is carbohydrate biosynthesis; gluconeogenesis. It participates in carbohydrate degradation; glycolysis; D-glyceraldehyde 3-phosphate and glycerone phosphate from D-glucose: step 2/4. In terms of biological role, catalyzes the reversible isomerization of glucose-6-phosphate to fructose-6-phosphate. The sequence is that of Glucose-6-phosphate isomerase from Mycobacterium bovis (strain BCG / Tokyo 172 / ATCC 35737 / TMC 1019).